Consider the following 466-residue polypeptide: Asparagine--tRNA ligase (466 aa).

The protein belongs to the class-II aminoacyl-tRNA synthetase family. In terms of assembly, homodimer.

The protein localises to the cytoplasm. The enzyme catalyses tRNA(Asn) + L-asparagine + ATP = L-asparaginyl-tRNA(Asn) + AMP + diphosphate + H(+). The chain is Asparagine--tRNA ligase from Aeromonas hydrophila subsp. hydrophila (strain ATCC 7966 / DSM 30187 / BCRC 13018 / CCUG 14551 / JCM 1027 / KCTC 2358 / NCIMB 9240 / NCTC 8049).